A 460-amino-acid polypeptide reads, in one-letter code: Angiopoietin-related protein 3 (460 aa).

The signal sequence occupies residues 1 to 16 (MFTIKLLLFIVPLVIS). Residues 17–165 (SRIDQDNSSF…PEHPEVTSLK (149 aa)) are sufficient to inhibit LPL lipase activity. A sufficient to inhibit LIPG/EL phospholipase activity region spans residues 17–207 (SRIDQDNSSF…EIENQLRRTS (191 aa)). Residues 32–56 (EPKSRFAMLDDVKILANGLLQLGHG) are required for inhibition of LPL lipase activity. Positions 85-210 (LSLQTSEIKE…NQLRRTSIQE (126 aa)) form a coiled coil. Residue Asn115 is glycosylated (N-linked (GlcNAc...) asparagine). Thr226 carries an O-linked (GalNAc) threonine glycan. A Fibrinogen C-terminal domain is found at 237 to 455 (VKHDGIPAEC…STKMLIHPTD (219 aa)). An intrachain disulfide couples Cys246 to Cys274. Asn296 and Asn357 each carry an N-linked (GlcNAc...) asparagine glycan. An intrachain disulfide couples Cys394 to Cys408.

As to quaternary structure, interacts with ANGPTL8. Interacts with ITGB3. Post-translationally, O-glycosylated at Thr-226 by GALNT2; blocks processing and activation by proprotein convertases. In terms of processing, in part proteolytically cleaved by proprotein convertases; proposed to be involved in activation. Expressed principally in liver. Weakly expressed in kidney. Binds to adipocytes. Increased expression and colocalization with activated ITGB3 in glomeruli of patients with nephrotic syndrome showing effaced podocyte foot processes (at protein level).

It localises to the secreted. It is found in the cell projection. The protein localises to the lamellipodium. Functionally, acts in part as a hepatokine that is involved in regulation of lipid and glucose metabolism. Proposed to play a role in the trafficking of energy substrates to either storage or oxidative tissues in response to food intake. Has a stimulatory effect on plasma triglycerides (TG), which is achieved by suppressing plasma TG clearance via inhibition of LPL activity. The inhibition of LPL activity appears to be an indirect mechanism involving recruitment of proprotein convertases PCSK6 and FURIN to LPL leading to cleavage and dissociation of LPL from the cell surface; the function does not require ANGPTL3 proteolytic cleavage but seems to be mediated by the N-terminal domain, and is not inhibited by GPIHBP1. Can inhibit endothelial lipase, causing increased plasma levels of high density lipoprotein (HDL) cholesterol and phospholipids. Can bind to adipocytes to activate lipolysis, releasing free fatty acids and glycerol. Suppresses LPL specifically in oxidative tissues which is required to route very low density lipoprotein (VLDL)-TG to white adipose tissue (WAT) for storage in response to food; the function may involve cooperation with circulating, liver-derived ANGPTL8 and ANGPTL4 expression in WAT. Contributes to lower plasma levels of low density lipoprotein (LDL)-cholesterol by a mechanism that is independent of the canonical pathway implicating APOE and LDLR. May stimulate hypothalamic LPL activity. In vitro inhibits LPL activity; not effective on GPIHBP1-stabilized LPL. In terms of biological role, involved in angiogenesis. Binds to endothelial cells via integrin alpha-V/beta-3 (ITGAV:ITGB3), activates FAK, MAPK and Akt signaling pathways and induces cell adhesion and cell migration. Secreted from podocytes, may modulate properties of glomerular endothelial cells involving integrin alpha-V/beta-3 and Akt signaling. May increase the motility of podocytes. May induce actin filament rearrangements in podocytes implicating integrin alpha-V/beta-3 and Rac1 activation. Binds to hematopoietic stem cells (HSC) and is involved in the regulation of HSC activity probably implicating down-regulation of IKZF1/IKAROS. The sequence is that of Angiopoietin-related protein 3 (ANGPTL3) from Homo sapiens (Human).